A 432-amino-acid polypeptide reads, in one-letter code: Adenylosuccinate synthetase (432 aa).

GTP is bound by residues 13 to 19 and 41 to 43; these read GDEGKGK and GHT. Residue Asp-14 is the Proton acceptor of the active site. The Mg(2+) site is built by Asp-14 and Gly-41. IMP contacts are provided by residues 14 to 17, 39 to 42, Thr-130, Arg-144, Gln-225, Thr-240, and Arg-304; these read DEGK and NAGH. His-42 functions as the Proton donor in the catalytic mechanism. 300–306 is a binding site for substrate; it reads ATTGRRR. GTP contacts are provided by residues Arg-306, 332–334, and 415–417; these read KLD and STG.

This sequence belongs to the adenylosuccinate synthetase family. Homodimer. Mg(2+) serves as cofactor.

It localises to the cytoplasm. The enzyme catalyses IMP + L-aspartate + GTP = N(6)-(1,2-dicarboxyethyl)-AMP + GDP + phosphate + 2 H(+). Its pathway is purine metabolism; AMP biosynthesis via de novo pathway; AMP from IMP: step 1/2. Functionally, plays an important role in the de novo pathway of purine nucleotide biosynthesis. Catalyzes the first committed step in the biosynthesis of AMP from IMP. The protein is Adenylosuccinate synthetase of Baumannia cicadellinicola subsp. Homalodisca coagulata.